The primary structure comprises 524 residues: Ankyrin repeat-containing protein At5g02620 (524 aa).

ANK repeat units lie at residues 16 to 45 (RDDT…GVEL), 55 to 84 (SGET…SVLA), 90 to 119 (NGFD…ELSF), 124 to 153 (SKTT…DLAA), 158 to 187 (NGKT…GMVT), 192 to 222 (KGQT…LINS), 226 to 255 (KGNT…VSRV), and 260 to 289 (SGET…QNAR). 4 helical membrane passes run 349-369 (AINS…AAIF), 399-419 (FLIF…VVVV), 441-461 (LMWM…FVVV), and 472-492 (VTAI…YWVI). Ser-508 carries the post-translational modification Phosphoserine.

It localises to the membrane. This chain is Ankyrin repeat-containing protein At5g02620, found in Arabidopsis thaliana (Mouse-ear cress).